The sequence spans 307 residues: MTSLDDTIISYQNIMLLDNMTNYNKPAIDYFHHEFNDASLEISASWTLLLKMRKHKLLRLPSCSSEDVLDYNMYLVRLHHCLWRRWSINHYGLQNSKSNPLSINWNKETDVTVLYGPDLTNIDSNENEISPVQNQIDQKQTKNLKSALKKNTECWVTEEVDEINASIESNDNALVKLEDISCPSSVDSHTSSIFDQHSTCTKISSIDEDSEDLMNEKKEQFPRKLKFNQAVMKREIDSKGTIRESLININDIQHSRHHRRHHRRHHHHHHQNSSHSDETIKEAHYEFSNYTFGTMEEDIFYRNQVVF.

A disordered region spans residues 254–278 (HSRHHRRHHRRHHHHHHQNSSHSDE). Positions 255 to 272 (SRHHRRHHRRHHHHHHQN) are enriched in basic residues.

It to yeast YOR062c.

This is an uncharacterized protein from Saccharomyces cerevisiae (strain ATCC 204508 / S288c) (Baker's yeast).